The sequence spans 94 residues: Large ribosomal subunit protein bL25 (94 aa).

Belongs to the bacterial ribosomal protein bL25 family. Part of the 50S ribosomal subunit; part of the 5S rRNA/L5/L18/L25 subcomplex. Contacts the 5S rRNA. Binds to the 5S rRNA independently of L5 and L18.

Functionally, this is one of the proteins that binds to the 5S RNA in the ribosome where it forms part of the central protuberance. This chain is Large ribosomal subunit protein bL25, found in Citrobacter koseri (strain ATCC BAA-895 / CDC 4225-83 / SGSC4696).